We begin with the raw amino-acid sequence, 264 residues long: Thymidylate synthase (264 aa).

Residue arginine 21 coordinates dUMP. A (6R)-5,10-methylene-5,6,7,8-tetrahydrofolate-binding site is contributed by histidine 51. DUMP is bound at residue 126–127 (RR). Cysteine 146 functions as the Nucleophile in the catalytic mechanism. Residues 166-169 (RSAD), asparagine 177, and 207-209 (HIY) each bind dUMP. Aspartate 169 serves as a coordination point for (6R)-5,10-methylene-5,6,7,8-tetrahydrofolate. Alanine 263 is a (6R)-5,10-methylene-5,6,7,8-tetrahydrofolate binding site.

Belongs to the thymidylate synthase family. Bacterial-type ThyA subfamily. In terms of assembly, homodimer.

It localises to the cytoplasm. The enzyme catalyses dUMP + (6R)-5,10-methylene-5,6,7,8-tetrahydrofolate = 7,8-dihydrofolate + dTMP. It participates in pyrimidine metabolism; dTTP biosynthesis. Its function is as follows. Catalyzes the reductive methylation of 2'-deoxyuridine-5'-monophosphate (dUMP) to 2'-deoxythymidine-5'-monophosphate (dTMP) while utilizing 5,10-methylenetetrahydrofolate (mTHF) as the methyl donor and reductant in the reaction, yielding dihydrofolate (DHF) as a by-product. This enzymatic reaction provides an intracellular de novo source of dTMP, an essential precursor for DNA biosynthesis. This chain is Thymidylate synthase, found in Bacteroides fragilis (strain ATCC 25285 / DSM 2151 / CCUG 4856 / JCM 11019 / LMG 10263 / NCTC 9343 / Onslow / VPI 2553 / EN-2).